Here is a 453-residue protein sequence, read N- to C-terminus: DDB1- and CUL4-associated factor 12 (453 aa).

The segment covering Met1–Ala12 has biased composition (basic residues). The tract at residues Met1 to His34 is disordered. A required for nuclear location and interaction with MOV10 region spans residues Met1 to Arg38. Ser15 is modified (phosphoserine). WD repeat units lie at residues Gln138–Val178, Gly182–Ser220, Pro250–Leu289, and Glu338–Glu375.

This sequence belongs to the WD repeat DCAF12 family. Component of the DCX(DCAF12) E3 ubiquitin ligase complex, at least composed of CUL4 (CUL4A or CUL4B), DDB1, DCAF12 and RBX1.

Its subcellular location is the cytoplasm. It is found in the cytoskeleton. It localises to the microtubule organizing center. The protein localises to the centrosome. The protein resides in the nucleus. It participates in protein modification; protein ubiquitination. Its function is as follows. Substrate-recognition component of a DCX (DDB1-CUL4-X-box) E3 ubiquitin-protein ligase complex of the DesCEND (destruction via C-end degrons) pathway, which recognizes a C-degron located at the extreme C terminus of target proteins, leading to their ubiquitination and degradation. The C-degron recognized by the DesCEND pathway is usually a motif of less than ten residues and can be present in full-length proteins, truncated proteins or proteolytically cleaved forms. The DCX(DCAF12) complex specifically recognizes proteins with a diglutamate (Glu-Glu) at the C-terminus, such as MAGEA3, MAGEA6 and CCT5, leading to their ubiquitination and degradation. Ubiquitination of MAGEA3, MAGEA6 by DCX(DCAF12) complex is required for starvation-induced autophagy. Also directly recognizes the C-terminal glutamate-leucine (Glu-Leu) degron as an alternative degron in proteins such as MOV10, leading to their ubiquitination and degradation. Controls the protein level of MOV10 during spermatogenesis and in T cells, especially after their activation. The protein is DDB1- and CUL4-associated factor 12 of Mus musculus (Mouse).